Reading from the N-terminus, the 512-residue chain is GMP synthase [glutamine-hydrolyzing] (512 aa).

The 191-residue stretch at 7-197 folds into the Glutamine amidotransferase type-1 domain; it reads TILILDFGGQ…LFEVCDCSAD (191 aa). C84 serves as the catalytic Nucleophile. Residues H171 and E173 contribute to the active site. The region spanning 198 to 387 is the GMPS ATP-PPase domain; sequence WTMDSLIEQT…LGIPDEILYR (190 aa). 225-231 lines the ATP pocket; sequence SGGVDSA.

In terms of assembly, homodimer.

The catalysed reaction is XMP + L-glutamine + ATP + H2O = GMP + L-glutamate + AMP + diphosphate + 2 H(+). It participates in purine metabolism; GMP biosynthesis; GMP from XMP (L-Gln route): step 1/1. Functionally, catalyzes the synthesis of GMP from XMP. In Caldanaerobacter subterraneus subsp. tengcongensis (strain DSM 15242 / JCM 11007 / NBRC 100824 / MB4) (Thermoanaerobacter tengcongensis), this protein is GMP synthase [glutamine-hydrolyzing].